Consider the following 284-residue polypeptide: Nucleotide-binding protein NMC0691 (284 aa).

Position 8–15 (8–15 (GLSGSGKS)) interacts with ATP. 58-61 (DVRS) is a GTP binding site.

It belongs to the RapZ-like family.

Its function is as follows. Displays ATPase and GTPase activities. This Neisseria meningitidis serogroup C / serotype 2a (strain ATCC 700532 / DSM 15464 / FAM18) protein is Nucleotide-binding protein NMC0691.